An 895-amino-acid polypeptide reads, in one-letter code: Tiger protein D1 (895 aa).

Residues 1 to 21 form the signal peptide; it reads MIHKMYFFLILLFSLFIIVYS. At 22 to 861 the chain is on the extracellular side; the sequence is APNRVTRNET…ERKSSKLSGG (840 aa). N-linked (GlcNAc...) asparagine glycans are attached at residues Asn29, Asn52, Asn171, Asn181, Asn253, Asn257, Asn277, Asn288, Asn351, Asn368, Asn407, Asn428, Asn451, Asn481, Asn507, Asn521, Asn573, Asn583, Asn593, Asn623, Asn652, Asn685, Asn720, Asn757, Asn766, Asn780, and Asn799. The region spanning 295–381 is the IPT/TIG 1 domain; it reads AVISSISSVS…SGSDAVTFTY (87 aa). IPT/TIG domains follow at residues 560–638 and 642–725; these read PKVE…SFYL and PVIY…TLTY. Residues 862–882 traverse the membrane as a helical segment; sequence AIAGITIGCVAGAGALVGSVF. Over 883-895 the chain is Cytoplasmic; it reads YFKLITRVKKAFN.

Its subcellular location is the cell membrane. In terms of biological role, may be involved in the regulation of aggregation. Activates tgrC1. This is Tiger protein D1 (tgrD1) from Dictyostelium discoideum (Social amoeba).